The sequence spans 322 residues: CRISPR-associated endonuclease Cas1 (322 aa).

Mn(2+) contacts are provided by Glu-149, His-214, and Glu-229.

It belongs to the CRISPR-associated endonuclease Cas1 family. As to quaternary structure, homodimer, forms a heterotetramer with a Cas2 homodimer. The cofactor is Mg(2+). Requires Mn(2+) as cofactor.

Functionally, CRISPR (clustered regularly interspaced short palindromic repeat), is an adaptive immune system that provides protection against mobile genetic elements (viruses, transposable elements and conjugative plasmids). CRISPR clusters contain spacers, sequences complementary to antecedent mobile elements, and target invading nucleic acids. CRISPR clusters are transcribed and processed into CRISPR RNA (crRNA). Acts as a dsDNA endonuclease. Involved in the integration of spacer DNA into the CRISPR cassette. This chain is CRISPR-associated endonuclease Cas1, found in Methanocaldococcus jannaschii (strain ATCC 43067 / DSM 2661 / JAL-1 / JCM 10045 / NBRC 100440) (Methanococcus jannaschii).